A 149-amino-acid chain; its full sequence is Calmodulin (149 aa).

4 EF-hand domains span residues 8–43 (QQIA…LGQN), 44–79 (PSES…KMKD), 81–116 (DSEA…IGEK), and 117–149 (LSDA…LAAK). Residues aspartate 21, aspartate 23, aspartate 25, lysine 27, glutamate 32, aspartate 57, asparagine 59, aspartate 61, serine 63, glutamate 68, aspartate 94, asparagine 96, aspartate 98, lysine 100, glutamate 105, aspartate 130, asparagine 132, aspartate 134, glutamate 136, and glutamate 141 each coordinate Ca(2+).

This sequence belongs to the calmodulin family.

Its function is as follows. Calmodulin mediates the control of a large number of enzymes, ion channels and other proteins by Ca(2+). Among the enzymes to be stimulated by the calmodulin-Ca(2+) complex are a number of protein kinases and phosphatases. This Candida albicans (Yeast) protein is Calmodulin (CMD1).